The sequence spans 551 residues: Glucan 1,4-alpha-maltotetraohydrolase (551 aa).

The first 21 residues, 1-21 (MSHILRAAVLAAVLLPFPALA), serve as a signal peptide directing secretion. Residues Asp22, Gln23, His34, Asp37, and Glu38 each contribute to the Ca(2+) site. Residue 99-100 (YF) participates in substrate binding. Asn137 is a binding site for Ca(2+). His138 lines the substrate pocket. Cys161 and Cys171 form a disulfide bridge. The Ca(2+) site is built by Asp172 and Asp175. Residue 177–181 (FIGGE) coordinates substrate. Residue Asp183 coordinates Ca(2+). Arg212 is a binding site for substrate. Asp214 serves as the catalytic Nucleophile. Gly218 is a Ca(2+) binding site. Cys237 and Cys272 are disulfide-bonded. Catalysis depends on Glu240, which acts as the Proton donor. Residues His314 and Gln326 each contribute to the substrate site. Residues 449 to 551 (GGEGGLVNVN…AAGASTSGSF (103 aa)) form the CBM20 domain.

This sequence belongs to the glycosyl hydrolase 13 family. In terms of assembly, monomer. Ca(2+) serves as cofactor.

It localises to the secreted. It carries out the reaction Hydrolysis of (1-&gt;4)-alpha-D-glucosidic linkages in amylaceous polysaccharides, to remove successive maltotetraose residues from the non-reducing chain ends.. It functions in the pathway glycan degradation; starch degradation. This Roseateles saccharophilus (Pseudomonas saccharophila) protein is Glucan 1,4-alpha-maltotetraohydrolase (mta).